The chain runs to 195 residues: Imidazoleglycerol-phosphate dehydratase (195 aa).

Belongs to the imidazoleglycerol-phosphate dehydratase family.

The protein localises to the cytoplasm. It carries out the reaction D-erythro-1-(imidazol-4-yl)glycerol 3-phosphate = 3-(imidazol-4-yl)-2-oxopropyl phosphate + H2O. The protein operates within amino-acid biosynthesis; L-histidine biosynthesis; L-histidine from 5-phospho-alpha-D-ribose 1-diphosphate: step 6/9. This chain is Imidazoleglycerol-phosphate dehydratase, found in Cereibacter sphaeroides (strain ATCC 17025 / ATH 2.4.3) (Rhodobacter sphaeroides).